The sequence spans 308 residues: Cytochrome b (308 aa).

4 helical membrane-spanning segments follow: residues 1–21 (FGSL…LLAT), 45–66 (WLIR…YIHI), 81–101 (WNVG…GYVL), and 146–166 (FFAL…VHLT). Positions 51 and 65 each coordinate heme b. Residues H150 and H164 each coordinate heme b. Residue H169 coordinates a ubiquinone. Helical transmembrane passes span 194 to 214 (MKDI…ALFS), 256 to 276 (LGGV…PLLH), and 288 to 308 (LSQI…WVGS).

This sequence belongs to the cytochrome b family. As to quaternary structure, the cytochrome bc1 complex contains 11 subunits: 3 respiratory subunits (MT-CYB, CYC1 and UQCRFS1), 2 core proteins (UQCRC1 and UQCRC2) and 6 low-molecular weight proteins (UQCRH/QCR6, UQCRB/QCR7, UQCRQ/QCR8, UQCR10/QCR9, UQCR11/QCR10 and a cleavage product of UQCRFS1). This cytochrome bc1 complex then forms a dimer. Heme b is required as a cofactor.

It is found in the mitochondrion inner membrane. In terms of biological role, component of the ubiquinol-cytochrome c reductase complex (complex III or cytochrome b-c1 complex) that is part of the mitochondrial respiratory chain. The b-c1 complex mediates electron transfer from ubiquinol to cytochrome c. Contributes to the generation of a proton gradient across the mitochondrial membrane that is then used for ATP synthesis. The chain is Cytochrome b (MT-CYB) from Ptiloprora plumbea (Leaden honeyeater).